The chain runs to 298 residues: Enoyl-CoA hydratase AKT6-1 (298 aa).

A disordered region spans residues 1–23; sequence MTFSTTKSVAMSPDDDAPSFDIN.

Belongs to the enoyl-CoA hydratase/isomerase family.

The protein operates within mycotoxin biosynthesis. In terms of biological role, enoyl-CoA hydratase; part of the gene clusters that mediate the biosynthesis of the host-selective toxins (HSTs) AK-toxins responsible for Japanese pear black spot disease by the Japanese pear pathotype. AK-toxins are esters of 9,10-epoxy 8-hydroxy 9-methyldecatrienoic acid (EDA). On cellular level, AK-toxins affect plasma membrane of susceptible cells and cause a sudden increase in loss of K(+) after a few minutes of toxin treatment. The acyl-CoA ligase AKT1, the hydrolase AKT2 and enoyl-CoA hydratase AKT3 are all involved in the biosynthesis of the AK-, AF- and ACT-toxin common 9,10-epoxy-8-hydroxy-9-methyl-decatrienoic acid (EDA) structural moiety. Part of the EDA biosynthesis occurs in the peroxisome since these 3 enzymes are localized in peroxisomes. The exact roles of the 3 enzymes, as well as of additional AK-toxin clusters enzymes, including AKT4, AKT6 and AKTS1, have still to be elucidated. The Cytochrome P450 monooxygenase AKT7 on the other side functions to limit production of EDA and AK-toxin, probably via the catalysis of a side reaction of EDA or its precursor. The sequence is that of Enoyl-CoA hydratase AKT6-1 from Alternaria alternata (Alternaria rot fungus).